The primary structure comprises 91 residues: Large ribosomal subunit protein uL23c (91 aa).

Belongs to the universal ribosomal protein uL23 family. Part of the 50S ribosomal subunit.

It localises to the plastid. Its subcellular location is the chloroplast. In terms of biological role, binds to 23S rRNA. The chain is Large ribosomal subunit protein uL23c (rpl23) from Pinus koraiensis (Korean pine).